Here is a 128-residue protein sequence, read N- to C-terminus: Small ribosomal subunit protein uS8c (128 aa).

This sequence belongs to the universal ribosomal protein uS8 family. Part of the 30S ribosomal subunit.

Its subcellular location is the plastid. The protein localises to the chloroplast. Functionally, one of the primary rRNA binding proteins, it binds directly to 16S rRNA central domain where it helps coordinate assembly of the platform of the 30S subunit. This chain is Small ribosomal subunit protein uS8c (rps8), found in Welwitschia mirabilis (Tree tumbo).